We begin with the raw amino-acid sequence, 308 residues long: UPF0282 protein M164_2122 (308 aa).

It belongs to the UPF0282 family.

The chain is UPF0282 protein M164_2122 from Saccharolobus islandicus (strain M.16.4 / Kamchatka #3) (Sulfolobus islandicus).